A 617-amino-acid chain; its full sequence is Kelch-like protein 9 (617 aa).

Residues 50–119 enclose the BTB domain; that stretch reads CDVTLVPGDG…IYTAKLSLNM (70 aa). The BACK domain occupies 154 to 255; sequence CVEVGRIANT…TPQDLINYVQ (102 aa). Kelch repeat units lie at residues 299 to 347, 348 to 399, 400 to 446, 448 to 493, 495 to 545, and 546 to 594; these read HLVT…VIGN, FLYV…ALKG, HLYA…VYGG, MYIS…TVGD, LYVI…VFEN, and KIYV…TLTV. The disordered stretch occupies residues 595–617; the sequence is FPPEENPGSPSRESPLSAPSDHS.

As to quaternary structure, component of the BCR(KLHL9-KLHL13) E3 ubiquitin ligase complex, at least composed of CUL3, KLHL9, KLHL13 and RBX1. Interacts with AURKB.

Its pathway is protein modification; protein ubiquitination. Its function is as follows. Substrate-specific adapter of a BCR (BTB-CUL3-RBX1) E3 ubiquitin-protein ligase complex required for mitotic progression and cytokinesis. The BCR(KLHL9-KLHL13) E3 ubiquitin ligase complex mediates the ubiquitination of AURKB and controls the dynamic behavior of AURKB on mitotic chromosomes and thereby coordinates faithful mitotic progression and completion of cytokinesis. This is Kelch-like protein 9 (Klhl9) from Mus musculus (Mouse).